We begin with the raw amino-acid sequence, 448 residues long: Glutamyl-tRNA reductase (448 aa).

Residues 49–52 (TCNR), serine 109, 114–116 (ETQ), and glutamine 120 each bind substrate. The Nucleophile role is filled by cysteine 50. NADP(+) is bound at residue 189 to 194 (GAGETG). The tract at residues 427-448 (PVDEVEETDATSAKAPLRALMR) is disordered.

This sequence belongs to the glutamyl-tRNA reductase family. As to quaternary structure, homodimer.

The enzyme catalyses (S)-4-amino-5-oxopentanoate + tRNA(Glu) + NADP(+) = L-glutamyl-tRNA(Glu) + NADPH + H(+). It functions in the pathway porphyrin-containing compound metabolism; protoporphyrin-IX biosynthesis; 5-aminolevulinate from L-glutamyl-tRNA(Glu): step 1/2. Its function is as follows. Catalyzes the NADPH-dependent reduction of glutamyl-tRNA(Glu) to glutamate 1-semialdehyde (GSA). The protein is Glutamyl-tRNA reductase of Exiguobacterium sp. (strain ATCC BAA-1283 / AT1b).